The chain runs to 424 residues: Sulfatase ppz1 (424 aa).

D13, D203, and N204 together coordinate Ca(2+).

This sequence belongs to the sulfatase family. Requires Ca(2+) as cofactor.

Sulfatase; part of the gene cluster that mediates the biosynthesis of pyrrolopyrazines, secondary metabolites showing insecticidal activity. The role of ppz1 within the pathway has still to be determined. The single multifunctional NRPS ppzA is sufficient to produce peramine via condensation of 1-pyrroline-5-carboxylate and arginine, N-methylation of the alpha-amino group of arginine and reduction of the thioester and the cyclization to form an iminium ion resulting in release from the peptide synthetase. Deprotonation of this intermediate and oxidation of the pyrroline ring would give rise to peramine. In Epichloe species that produce only peramine, the peramine synthetase gene is not localized in a gene cluster, in contrast to Metarhizium species that contain additional pyrrolopyrazine biosynthesis genes. The 2-oxoglutarate-Fe(II) type oxidoreductase ppzC hydroxylates peramine to yield the newly identified compound 8-hydroxyperamine whereas ppzD converts L-proline into trans-4-hydroxy-L-proline, a precursor of peramine biosynthesis. The sequence is that of Sulfatase ppz1 from Metarhizium majus (strain ARSEF 297).